Consider the following 421-residue polypeptide: Tyrosine-protein phosphatase non-receptor type 20 (421 aa).

The tract at residues 1-58 (MSSPGNVRQKHGRDNDEHEGDSDDLNLQKSLPSSSQQKTPTKPVFGNKVNSESVKTSH) is disordered. The span at 27–41 (LQKSLPSSSQQKTPT) shows a compositional bias: low complexity. Polar residues predominate over residues 48–58 (KVNSESVKTSH). The residue at position 76 (serine 76) is a Phosphoserine. The disordered stretch occupies residues 93-116 (RWSSVDPESAGPSKTVSTVLSESS). Residues 104–116 (PSKTVSTVLSESS) show a composition bias toward polar residues. Phosphoserine is present on serine 122. One can recognise a Tyrosine-protein phosphatase domain in the interval 160–413 (IIREFLELEE…QFCYEIVLEV (254 aa)). Substrate-binding positions include aspartate 324, 354 to 360 (CSAGVGR), and glutamine 398. The Phosphocysteine intermediate role is filled by cysteine 354.

Belongs to the protein-tyrosine phosphatase family. Non-receptor class subfamily.

The protein resides in the nucleus. Its subcellular location is the cytoplasm. It is found in the cytoskeleton. The protein localises to the microtubule organizing center. It localises to the centrosome. The enzyme catalyses O-phospho-L-tyrosyl-[protein] + H2O = L-tyrosyl-[protein] + phosphate. Tyrosine-protein phosphatase targeted to sites of actin polymerization in response of varied extracellular stimuli. Has tyrosine phosphatase activity towards various tyrosyl phosphorylated substrates. The sequence is that of Tyrosine-protein phosphatase non-receptor type 20 (Ptpn20) from Rattus norvegicus (Rat).